We begin with the raw amino-acid sequence, 164 residues long: Transcriptional repressor NrdR (164 aa).

A zinc finger lies at 3–34; that stretch reads CPFCSAQDTKVIDSRLVADGVQIRRRRECLSC. The 91-residue stretch at 49-139 folds into the ATP-cone domain; sequence PRLVKTDGTR…VYRSFQDISE (91 aa).

Belongs to the NrdR family. Zn(2+) serves as cofactor.

Functionally, negatively regulates transcription of bacterial ribonucleotide reductase nrd genes and operons by binding to NrdR-boxes. The chain is Transcriptional repressor NrdR from Alcanivorax borkumensis (strain ATCC 700651 / DSM 11573 / NCIMB 13689 / SK2).